We begin with the raw amino-acid sequence, 209 residues long: Kynurenine formamidase (209 aa).

Trp18 lines the substrate pocket. Positions 48, 52, and 54 each coordinate Zn(2+). Catalysis depends on His58, which acts as the Proton donor/acceptor. Residues His160 and Glu172 each contribute to the Zn(2+) site.

Belongs to the Cyclase 1 superfamily. KynB family. As to quaternary structure, homodimer. Requires Zn(2+) as cofactor.

The catalysed reaction is N-formyl-L-kynurenine + H2O = L-kynurenine + formate + H(+). Its pathway is amino-acid degradation; L-tryptophan degradation via kynurenine pathway; L-kynurenine from L-tryptophan: step 2/2. Its function is as follows. Catalyzes the hydrolysis of N-formyl-L-kynurenine to L-kynurenine, the second step in the kynurenine pathway of tryptophan degradation. This Maricaulis maris (strain MCS10) (Caulobacter maris) protein is Kynurenine formamidase.